Consider the following 398-residue polypeptide: Candidapepsin-2 (398 aa).

The signal sequence occupies residues 1–18 (MFLKNIFIGLAIALLVDA). Positions 19-56 (TPTTTKRSAGFVALDFSVVKTPKAFPVTNGQEGKTSKR) are cleaved as a propeptide — activation peptide. A Peptidase A1 domain is found at 70–384 (YAADITVGSN…DLDNNEISLA (315 aa)). D88 is an active-site residue. A pepstatin A-binding site is contributed by 88–90 (DTG). The cysteines at positions 103 and 115 are disulfide-linked. Pepstatin A contacts are provided by residues 141–142 (GD) and 274–278 (DSGTT). Residue D274 is part of the active site. Residues C312 and C350 are joined by a disulfide bond. N-linked (GlcNAc...) asparagine glycans are attached at residues N313 and N321.

Belongs to the peptidase A1 family. Monomer. In terms of processing, O-glycosylated.

It localises to the secreted. It catalyses the reaction Preferential cleavage at the carboxyl of hydrophobic amino acids, but fails to cleave 15-Leu-|-Tyr-16, 16-Tyr-|-Leu-17 and 24-Phe-|-Phe-25 of insulin B chain. Activates trypsinogen, and degrades keratin.. The polypeptide is Candidapepsin-2 (SAP2) (Candida albicans (strain WO-1) (Yeast)).